A 369-amino-acid polypeptide reads, in one-letter code: 2-aminoethylphosphonate--pyruvate transaminase 1 (369 aa).

Lys191 carries the post-translational modification N6-(pyridoxal phosphate)lysine.

It belongs to the class-V pyridoxal-phosphate-dependent aminotransferase family. PhnW subfamily. As to quaternary structure, homodimer. The cofactor is pyridoxal 5'-phosphate.

The catalysed reaction is (2-aminoethyl)phosphonate + pyruvate = phosphonoacetaldehyde + L-alanine. In terms of biological role, involved in phosphonate degradation. The sequence is that of 2-aminoethylphosphonate--pyruvate transaminase 1 from Burkholderia lata (strain ATCC 17760 / DSM 23089 / LMG 22485 / NCIMB 9086 / R18194 / 383).